Consider the following 156-residue polypeptide: 6,7-dimethyl-8-ribityllumazine synthase (156 aa).

5-amino-6-(D-ribitylamino)uracil-binding positions include Phe22, 57-59, and 81-83; these read AYE and SVI. Residue 86–87 coordinates (2S)-2-hydroxy-3-oxobutyl phosphate; sequence GT. The active-site Proton donor is the His89. Phe114 is a binding site for 5-amino-6-(D-ribitylamino)uracil. Arg128 is a (2S)-2-hydroxy-3-oxobutyl phosphate binding site.

This sequence belongs to the DMRL synthase family. In terms of assembly, forms an icosahedral capsid composed of 60 subunits, arranged as a dodecamer of pentamers.

The enzyme catalyses (2S)-2-hydroxy-3-oxobutyl phosphate + 5-amino-6-(D-ribitylamino)uracil = 6,7-dimethyl-8-(1-D-ribityl)lumazine + phosphate + 2 H2O + H(+). The protein operates within cofactor biosynthesis; riboflavin biosynthesis; riboflavin from 2-hydroxy-3-oxobutyl phosphate and 5-amino-6-(D-ribitylamino)uracil: step 1/2. Its function is as follows. Catalyzes the formation of 6,7-dimethyl-8-ribityllumazine by condensation of 5-amino-6-(D-ribitylamino)uracil with 3,4-dihydroxy-2-butanone 4-phosphate. This is the penultimate step in the biosynthesis of riboflavin. The protein is 6,7-dimethyl-8-ribityllumazine synthase of Photobacterium leiognathi.